Reading from the N-terminus, the 323-residue chain is Vertebrate ancient opsin (323 aa).

Residues 1–38 (MDTLRIAVNGVSYNEASEIYKPHADPFTGPITNLAPWN) are Extracellular-facing. The helical transmembrane segment at 39–63 (FAVLATLMFVITSLSLFENFTVMLA) threads the bilayer. Residues 64-75 (TYKFKQLRQPLN) lie on the Cytoplasmic side of the membrane. The helical transmembrane segment at 76–100 (YIIVNLSLADFLVSLTGGTISFLTN) threads the bilayer. The Extracellular segment spans residues 101–115 (ARGYFFLGNWACVLE). C112 and C189 are disulfide-bonded. The chain crosses the membrane as a helical span at residues 116 to 135 (GFAVTYFGIVAMWSLAVLSF). Topologically, residues 136 to 154 (ERYFVICRPLGNVRLRGKH) are cytoplasmic. The chain crosses the membrane as a helical span at residues 155–178 (AALGLLFVWTFSFIWTIPPVFGWC). Residues 179-202 (SYTVSKIGTTCEPNWYSNNIWNHT) are Extracellular-facing. N-linked (GlcNAc...) asparagine glycosylation is present at N200. The helical transmembrane segment at 203–230 (YIITFFVTCFIMPLGMIIYCYGKLLQKL) threads the bilayer. Topologically, residues 231 to 250 (RKVSHDRLGNAKKPERQVSR) are cytoplasmic. The chain crosses the membrane as a helical span at residues 251-274 (MVVVMIVAYLVGWTPYAAFSIIVT). Residues 275-282 (ACPTIYLD) are Extracellular-facing. A helical transmembrane segment spans residues 283–307 (PRLAAAPAFFSKTAAVYNPVIYVFM). K294 carries the post-translational modification N6-(retinylidene)lysine. The Cytoplasmic portion of the chain corresponds to 308–323 (NKQVSTQLNWGFWSRA).

Belongs to the G-protein coupled receptor 1 family. Opsin subfamily. In terms of processing, phosphorylated on some or all of the serine and threonine residues present in the C-terminal region.

Its subcellular location is the membrane. This Salmo salar (Atlantic salmon) protein is Vertebrate ancient opsin.